The primary structure comprises 217 residues: Phosphatidylserine decarboxylase proenzyme (217 aa).

Catalysis depends on Ser182, which acts as the Schiff-base intermediate with substrate; via pyruvic acid. Pyruvic acid (Ser); by autocatalysis is present on Ser182.

This sequence belongs to the phosphatidylserine decarboxylase family. PSD-A subfamily. Heterodimer of a large membrane-associated beta subunit and a small pyruvoyl-containing alpha subunit. The cofactor is pyruvate. Post-translationally, is synthesized initially as an inactive proenzyme. Formation of the active enzyme involves a self-maturation process in which the active site pyruvoyl group is generated from an internal serine residue via an autocatalytic post-translational modification. Two non-identical subunits are generated from the proenzyme in this reaction, and the pyruvate is formed at the N-terminus of the alpha chain, which is derived from the carboxyl end of the proenzyme. The post-translation cleavage follows an unusual pathway, termed non-hydrolytic serinolysis, in which the side chain hydroxyl group of the serine supplies its oxygen atom to form the C-terminus of the beta chain, while the remainder of the serine residue undergoes an oxidative deamination to produce ammonia and the pyruvoyl prosthetic group on the alpha chain.

It localises to the cell membrane. The catalysed reaction is a 1,2-diacyl-sn-glycero-3-phospho-L-serine + H(+) = a 1,2-diacyl-sn-glycero-3-phosphoethanolamine + CO2. It participates in phospholipid metabolism; phosphatidylethanolamine biosynthesis; phosphatidylethanolamine from CDP-diacylglycerol: step 2/2. Functionally, catalyzes the formation of phosphatidylethanolamine (PtdEtn) from phosphatidylserine (PtdSer). This chain is Phosphatidylserine decarboxylase proenzyme, found in Nitratidesulfovibrio vulgaris (strain ATCC 29579 / DSM 644 / CCUG 34227 / NCIMB 8303 / VKM B-1760 / Hildenborough) (Desulfovibrio vulgaris).